The following is a 134-amino-acid chain: MTNVFTIDAFREEVKKKYEPVTIGISEDVTVELKPLLKLGQKAREAVVEAVKEVEDIPDIDEDDEEAEELVDEYSLRICEIVAKVFRLIATKPKKLIAALDEEEDPRIRAELYATVLRTWMVETQLGEAAPSPS.

The protein belongs to the L5likevirus tail assembly protein family. In terms of assembly, interacts with tail assembly protein Gp25 and tape measure protein.

In terms of biological role, promotes tail assembly by creating a scaffold for the tail tube proteins. The tail assembly proteins Gp24 and Gp25 would wrap the linear tape measure protein to create a tail assembly scaffold. It would allow polymerization of tail tube protein during which Gp24 and Gp25 are released and therefore are absent from the mature virion. The tail assembly protein Gp25 is produced by a rare -1 ribosomal frameshift. The ratio Gp24/Gp25 is important for proper tail assembly. In Mycobacterium (Mycobacteriophage D29), this protein is Tail assembly protein Gp24 (24).